The chain runs to 362 residues: Phospho-N-acetylmuramoyl-pentapeptide-transferase (362 aa).

The next 10 helical transmembrane spans lie at 28 to 48, 75 to 95, 100 to 120, 134 to 154, 170 to 190, 201 to 221, 241 to 261, 265 to 285, 290 to 310, and 339 to 359; these read GAVLTALIVAFLVGPRIIAWL, TMGGFMILLALSVSTLLWADL, VWIVLLVTLGYGLIGFWDDYL, AKLVAEIAIALAAAAWVWSLQ, VLLQLSWFYLPFAVFIIVGAG, GLAIVPVMIASGVFAIFSYLV, LAVFCGALVGAGLGFLWFNAP, VFMGDTGSLALGGALGAISVV, LVLGIVGGLFVLETVSVIVQV, and TVVIRFWIIATILALAGLATL.

It belongs to the glycosyltransferase 4 family. MraY subfamily. It depends on Mg(2+) as a cofactor.

The protein resides in the cell inner membrane. It catalyses the reaction UDP-N-acetyl-alpha-D-muramoyl-L-alanyl-gamma-D-glutamyl-meso-2,6-diaminopimeloyl-D-alanyl-D-alanine + di-trans,octa-cis-undecaprenyl phosphate = di-trans,octa-cis-undecaprenyl diphospho-N-acetyl-alpha-D-muramoyl-L-alanyl-D-glutamyl-meso-2,6-diaminopimeloyl-D-alanyl-D-alanine + UMP. It participates in cell wall biogenesis; peptidoglycan biosynthesis. Catalyzes the initial step of the lipid cycle reactions in the biosynthesis of the cell wall peptidoglycan: transfers peptidoglycan precursor phospho-MurNAc-pentapeptide from UDP-MurNAc-pentapeptide onto the lipid carrier undecaprenyl phosphate, yielding undecaprenyl-pyrophosphoryl-MurNAc-pentapeptide, known as lipid I. The sequence is that of Phospho-N-acetylmuramoyl-pentapeptide-transferase from Paramagnetospirillum magneticum (strain ATCC 700264 / AMB-1) (Magnetospirillum magneticum).